The chain runs to 578 residues: mRNA-decapping enzyme 1B (578 aa).

N-acetylalanine is present on Ala-2. Phosphoserine is present on residues Ser-144 and Ser-145. Disordered regions lie at residues 187-222 and 246-265; these read AICDNPKLIKPVPVRPSSSQRLQGPAPSKTSDPEPQ and RTFAHHHHHHHQQQQETRPV. Over residues 248–257 the composition is skewed to basic residues; sequence FAHHHHHHHQ. Phosphoserine is present on residues Ser-274 and Ser-335. Thr-380 is subject to Phosphothreonine.

It belongs to the DCP1 family. Interacts with DCP1A.

The protein localises to the cytoplasm. It localises to the nucleus. The catalysed reaction is a 5'-end (N(7)-methyl 5'-triphosphoguanosine)-ribonucleoside in mRNA + H2O = N(7)-methyl-GDP + a 5'-end phospho-ribonucleoside in mRNA + 2 H(+). In terms of biological role, may play a role in the degradation of mRNAs, both in normal mRNA turnover and in nonsense-mediated mRNA decay. May remove the 7-methyl guanine cap structure from mRNA molecules, yielding a 5'-phosphorylated mRNA fragment and 7m-GDP. This Mus musculus (Mouse) protein is mRNA-decapping enzyme 1B (Dcp1b).